The chain runs to 390 residues: Galactokinase (390 aa).

33–36 (EHTD) provides a ligand contact to substrate. Residues S67 and 124-130 (GSGLSSS) each bind ATP. S130 and E162 together coordinate Mg(2+). The Proton acceptor role is filled by D174. Substrate is bound at residue Y224.

This sequence belongs to the GHMP kinase family. GalK subfamily.

The protein resides in the cytoplasm. It catalyses the reaction alpha-D-galactose + ATP = alpha-D-galactose 1-phosphate + ADP + H(+). It functions in the pathway carbohydrate metabolism; galactose metabolism. Its function is as follows. Catalyzes the transfer of the gamma-phosphate of ATP to D-galactose to form alpha-D-galactose-1-phosphate (Gal-1-P). The protein is Galactokinase of Streptococcus mutans serotype c (strain ATCC 700610 / UA159).